A 337-amino-acid chain; its full sequence is Protein ABHD13 (337 aa).

Residues 37 to 57 traverse the membrane as a helical; Signal-anchor for type II membrane protein segment; sequence FHLYGGIVLLLLIFVSIAGIL. Active-site charge relay system residues include serine 193, aspartate 268, and histidine 298. N-linked (GlcNAc...) asparagine glycosylation is present at asparagine 299.

The protein belongs to the serine esterase family.

The protein resides in the membrane. The protein is Protein ABHD13 of Mus musculus (Mouse).